The primary structure comprises 268 residues: 4-hydroxy-tetrahydrodipicolinate reductase (268 aa).

NAD(+)-binding positions include 8 to 13 (GAAGRM) and Asp35. Arg36 serves as a coordination point for NADP(+). Residues 99–101 (GTT) and 123–126 (AANF) each bind NAD(+). His156 serves as the catalytic Proton donor/acceptor. His157 is a binding site for (S)-2,3,4,5-tetrahydrodipicolinate. Lys160 (proton donor) is an active-site residue. A (S)-2,3,4,5-tetrahydrodipicolinate-binding site is contributed by 166–167 (GT).

The protein belongs to the DapB family.

It localises to the cytoplasm. The enzyme catalyses (S)-2,3,4,5-tetrahydrodipicolinate + NAD(+) + H2O = (2S,4S)-4-hydroxy-2,3,4,5-tetrahydrodipicolinate + NADH + H(+). It carries out the reaction (S)-2,3,4,5-tetrahydrodipicolinate + NADP(+) + H2O = (2S,4S)-4-hydroxy-2,3,4,5-tetrahydrodipicolinate + NADPH + H(+). It functions in the pathway amino-acid biosynthesis; L-lysine biosynthesis via DAP pathway; (S)-tetrahydrodipicolinate from L-aspartate: step 4/4. Catalyzes the conversion of 4-hydroxy-tetrahydrodipicolinate (HTPA) to tetrahydrodipicolinate. The sequence is that of 4-hydroxy-tetrahydrodipicolinate reductase from Pseudomonas aeruginosa (strain LESB58).